A 358-amino-acid polypeptide reads, in one-letter code: Thiol protease aleurain (358 aa).

The first 21 residues, M1–A21, serve as a signal peptide directing secretion. The tract at residues A22–V42 is interaction with VSR1. Positions A22 to A140 are cleaved as a propeptide — activation peptide. Residue N125 is glycosylated (N-linked (GlcNAc...) asparagine). Disulfide bonds link C162-C205 and C196-C238. The active site involves C165. The N-linked (GlcNAc...) asparagine glycan is linked to N254. C296 and C346 form a disulfide bridge. Active-site residues include H305 and N325.

This sequence belongs to the peptidase C1 family. As to quaternary structure, interacts with VSR1/BP80B. As to expression, expressed in leaves (at protein level).

It localises to the vacuole. The catalysed reaction is Hydrolysis of proteins, acting as an aminopeptidase (notably, cleaving Arg-|-Xaa bonds) as well as an endopeptidase.. May play a role in proteolysis leading to mobilization of nitrogen during senescence and starvation. The sequence is that of Thiol protease aleurain from Arabidopsis thaliana (Mouse-ear cress).